The sequence spans 137 residues: Transcription antitermination protein NusB (137 aa).

This sequence belongs to the NusB family.

In terms of biological role, involved in transcription antitermination. Required for transcription of ribosomal RNA (rRNA) genes. Binds specifically to the boxA antiterminator sequence of the ribosomal RNA (rrn) operons. This Aeromonas hydrophila subsp. hydrophila (strain ATCC 7966 / DSM 30187 / BCRC 13018 / CCUG 14551 / JCM 1027 / KCTC 2358 / NCIMB 9240 / NCTC 8049) protein is Transcription antitermination protein NusB.